Consider the following 41-residue polypeptide: Cytochrome b559 subunit beta (41 aa).

Residues 16-32 (WLAVHALAVPTVFFLGS) form a helical membrane-spanning segment. His20 serves as a coordination point for heme.

The protein belongs to the PsbE/PsbF family. As to quaternary structure, heterodimer of an alpha subunit and a beta subunit. PSII is composed of 1 copy each of membrane proteins PsbA, PsbB, PsbC, PsbD, PsbE, PsbF, PsbH, PsbI, PsbJ, PsbK, PsbL, PsbM, PsbT, PsbX, PsbY, PsbZ, Psb30/Ycf12, at least 3 peripheral proteins of the oxygen-evolving complex and a large number of cofactors. It forms dimeric complexes. Heme b serves as cofactor.

Its subcellular location is the plastid. The protein localises to the chloroplast thylakoid membrane. Functionally, this b-type cytochrome is tightly associated with the reaction center of photosystem II (PSII). PSII is a light-driven water:plastoquinone oxidoreductase that uses light energy to abstract electrons from H(2)O, generating O(2) and a proton gradient subsequently used for ATP formation. It consists of a core antenna complex that captures photons, and an electron transfer chain that converts photonic excitation into a charge separation. This is Cytochrome b559 subunit beta from Nephroselmis olivacea (Green alga).